We begin with the raw amino-acid sequence, 1409 residues long: L-2-aminoadipate reductase large subunit (1409 aa).

A Carrier domain is found at 858 to 937 (QALSETEQTL…GFASEIDRLL (80 aa)). Residue Ser-896 is modified to O-(pantetheine 4'-phosphoryl)serine.

This sequence belongs to the ATP-dependent AMP-binding enzyme family. In terms of assembly, heterodimer of an alpha and a beta subunit. The cofactor is pantetheine 4'-phosphate.

It catalyses the reaction (S)-2-amino-6-oxohexanoate + NADP(+) + H2O = L-2-aminoadipate + NADPH + 2 H(+). It carries out the reaction (S)-2-amino-6-oxohexanoate + NAD(+) + H2O = L-2-aminoadipate + NADH + 2 H(+). The enzyme catalyses (S)-2-amino-6-oxohexanoate + AMP + diphosphate + NADP(+) = L-2-aminoadipate + ATP + NADPH + H(+). It participates in amino-acid biosynthesis; L-lysine biosynthesis via AAA pathway; L-lysine from L-alpha-aminoadipate (fungal route): step 1/3. Its function is as follows. Catalyzes the activation of alpha-aminoadipate by ATP-dependent adenylation and the reduction of activated alpha-aminoadipate by NADPH. The activated alpha-aminoadipate is bound to the phosphopantheinyl group of the enzyme itself before it is reduced to (S)-2-amino-6-oxohexanoate. The sequence is that of L-2-aminoadipate reductase large subunit (lys2) from Penicillium chrysogenum (Penicillium notatum).